The sequence spans 369 residues: Cytokine receptor common subunit gamma (369 aa).

The first 22 residues, Met-1–Gly-22, serve as a signal peptide directing secretion. Residues Trp-23–Ala-263 are Extracellular-facing. The cysteines at positions 62 and 72 are disulfide-linked. N-linked (GlcNAc...) asparagine glycosylation is found at Asn-71, Asn-75, Asn-84, and Asn-96. Cys-102 and Cys-115 form a disulfide bridge. The 99-residue stretch at Ala-156–Glu-254 folds into the Fibronectin type-III domain. N-linked (GlcNAc...) asparagine glycosylation is found at Asn-159 and Asn-164. A WSXWS motif motif is present at residues Trp-238–Ser-242. Residues Val-264 to Leu-284 form a helical membrane-spanning segment. Residues Glu-285–Ala-369 are Cytoplasmic-facing. The short motif at Arg-286–Lys-294 is the Box 1 motif element.

It belongs to the type I cytokine receptor family. Type 5 subfamily. The gamma subunit is common to the IL2, IL4, IL7, IL15, IL21 and probably also the IL13 receptors. Interacts with SHB upon interleukin stimulation. Interacts with IL9.

The protein localises to the cell membrane. It localises to the cell surface. Its function is as follows. Common subunit for the receptors for a variety of interleukins. Probably in association with IL15RA, involved in the stimulation of neutrophil phagocytosis by IL15. In Mus musculus (Mouse), this protein is Cytokine receptor common subunit gamma (Il2rg).